The following is a 760-amino-acid chain: GLC7-interacting protein 4 (760 aa).

Disordered stretches follow at residues K449 to S573 and K593 to T626. Composition is skewed to low complexity over residues I454–S474 and S494–T506. Residues S497 and S501 each carry the phosphoserine modification. Over residues A512–K525 the composition is skewed to basic and acidic residues. Over residues S534 to H554 the composition is skewed to polar residues. 2 stretches are compositionally biased toward low complexity: residues S561–S573 and S594–T626. S609 is modified (phosphoserine).

Belongs to the GIP4 family. As to quaternary structure, interacts with GLC7.

It localises to the cytoplasm. In terms of biological role, GLC7 phosphatase-regulatory protein involved in GLC7 subcellular redistribution and chromosome segregation. The chain is GLC7-interacting protein 4 (GIP4) from Saccharomyces cerevisiae (strain ATCC 204508 / S288c) (Baker's yeast).